The following is a 397-amino-acid chain: S-adenosylmethionine synthase (397 aa).

H16 is a binding site for ATP. D18 serves as a coordination point for Mg(2+). E44 serves as a coordination point for K(+). 2 residues coordinate L-methionine: E57 and Q100. Residues 100-110 are flexible loop; it reads QSPDIAQGVNE. ATP is bound by residues 175 to 177, 242 to 243, D251, 257 to 258, A274, and K278; these read DAK, RF, and RK. D251 lines the L-methionine pocket. Residue K282 participates in L-methionine binding.

The protein belongs to the AdoMet synthase family. Homotetramer; dimer of dimers. The cofactor is Mg(2+). It depends on K(+) as a cofactor.

Its subcellular location is the cytoplasm. It catalyses the reaction L-methionine + ATP + H2O = S-adenosyl-L-methionine + phosphate + diphosphate. Its pathway is amino-acid biosynthesis; S-adenosyl-L-methionine biosynthesis; S-adenosyl-L-methionine from L-methionine: step 1/1. In terms of biological role, catalyzes the formation of S-adenosylmethionine (AdoMet) from methionine and ATP. The overall synthetic reaction is composed of two sequential steps, AdoMet formation and the subsequent tripolyphosphate hydrolysis which occurs prior to release of AdoMet from the enzyme. This chain is S-adenosylmethionine synthase, found in Streptococcus thermophilus (strain ATCC BAA-250 / LMG 18311).